The following is a 548-amino-acid chain: MDSQRNLLVIALLFVSFMIWQAWEQDKNPQPQAQQTTQTTTTAAGSAADQGVPASGQGKLISVKTDVLDLTINTRGGDVEQALLPAYPKELNSTQPFQLLETSPQFIYQAQSGLTGRDGPDNPANGPRPLYNVEKDAYVLAEGQNELQVPMTYTDAAGNTFTKTFVLKRGDYAVNVNYNVQNAGEKPLEISTFGQLKQSITLPPHLDTGSSNFALHTFRGAAYSTPDEKYEKYKFDTIADNENLNISSKGGWVAMLQQYFATAWIPHNDGTNNFYTANLGNGIAAIGYKSQPVLVQPGQTGAMNSTLWVGPEIQDKMAAVAPHLDLTVDYGWLWFISQPLFKLLKWIHSFVGNWGFSIIIITFIVRGIMYPLTKTQYTSMAKMRMLQPKIQAMRERLGDDKQRISQEMMALYKAEKVNPLGGCFPLLIQMPIFLALYYMLMGSVELRQAPFALWIHDLSAQDPYYILPILMGVTMFFIQKMSPTTVTDPMQQKIMTFMPVIFTVFFLWFPSGLVLYYIVSNLVTIIQQQLIYRGLEKRGLHSREKKKS.

Residues Asn-6–Asp-26 traverse the membrane as a helical segment. A disordered region spans residues Asn-28 to Ser-55. A compositionally biased stretch (low complexity) spans Gln-30–Gln-50. Helical transmembrane passes span Phe-350–Tyr-370, Leu-420–Leu-440, Leu-458–Ile-478, and Pro-499–Val-519.

It belongs to the OXA1/ALB3/YidC family. Type 1 subfamily. Interacts with the Sec translocase complex via SecD. Specifically interacts with transmembrane segments of nascent integral membrane proteins during membrane integration.

It is found in the cell inner membrane. Its function is as follows. Required for the insertion and/or proper folding and/or complex formation of integral membrane proteins into the membrane. Involved in integration of membrane proteins that insert both dependently and independently of the Sec translocase complex, as well as at least some lipoproteins. Aids folding of multispanning membrane proteins. The protein is Membrane protein insertase YidC of Shigella boydii serotype 18 (strain CDC 3083-94 / BS512).